An 84-amino-acid polypeptide reads, in one-letter code: Antitoxin VapB30 (84 aa).

Its function is as follows. Antitoxin component of a type II toxin-antitoxin (TA) system. Upon expression in M.smegmatis neutralizes the effect of cognate toxin VapC30. In Mycobacterium tuberculosis (strain ATCC 25618 / H37Rv), this protein is Antitoxin VapB30 (vapB30).